A 347-amino-acid chain; its full sequence is MPARLRPELTELPAYTPGRNVPGAIKLASNETVQEPLPSVRAALAEAGSLINRYPDNGYAELRSHLAKHVDMPPEHIAVGCGSVSLCQQLVQITATVGDEVLFGWRSFETYPLVVRVAGATPVQVPLVDHTYDLAAMAAAVTDVTRLIFVCNPNNPTGTVVRPAELRRFVESVPPHILIAIDEAYVEYVREDFTDSLALVREHPNVVVLRTFSKAYGLAGLRVGYAVGDPDVITTLGKVYVPFSASSLAQAAAVASLGAAEELLARTNDVVTERARVTSALREAGYQVPPSQANFVWLPLGERSTEFAQASAEARIIVRPFGTDGVRVTIGAPMENDAFLKFSRAWR.

Lysine 214 carries the post-translational modification N6-(pyridoxal phosphate)lysine.

Belongs to the class-II pyridoxal-phosphate-dependent aminotransferase family. As to quaternary structure, homodimer. It depends on pyridoxal 5'-phosphate as a cofactor.

It carries out the reaction an aromatic L-alpha-amino acid + 2-oxoglutarate = an aromatic oxo-acid + L-glutamate. Functionally, aminotransferase that catalyzes the conversion of aromatic amino acids and 2-oxoglutarate into corresponding aromatic oxo acids and L-glutamate. In Mycobacteroides abscessus (strain ATCC 19977 / DSM 44196 / CCUG 20993 / CIP 104536 / JCM 13569 / NCTC 13031 / TMC 1543 / L948) (Mycobacterium abscessus), this protein is Aromatic amino acid aminotransferase.